Consider the following 235-residue polypeptide: Uridylate kinase (235 aa).

Position 8 to 11 (8 to 11 (KFSG)) interacts with ATP. Positions 16–21 (GKEGYG) are involved in allosteric activation by GTP. Glycine 50 provides a ligand contact to UMP. The ATP site is built by glycine 51 and arginine 55. Residues aspartate 71 and 132-139 (TGNPYFTT) each bind UMP. Residues threonine 159, tyrosine 165, and aspartate 168 each coordinate ATP.

Belongs to the UMP kinase family. As to quaternary structure, homohexamer.

Its subcellular location is the cytoplasm. It catalyses the reaction UMP + ATP = UDP + ADP. The protein operates within pyrimidine metabolism; CTP biosynthesis via de novo pathway; UDP from UMP (UMPK route): step 1/1. Its activity is regulated as follows. Allosterically activated by GTP. Inhibited by UTP. Catalyzes the reversible phosphorylation of UMP to UDP. The chain is Uridylate kinase from Sulfurovum sp. (strain NBC37-1).